A 416-amino-acid chain; its full sequence is Multifunctional CCA protein (416 aa).

ATP is bound by residues G8 and R11. G8 and R11 together coordinate CTP. Residues D21 and D23 each coordinate Mg(2+). Residues R91, R137, and R140 each contribute to the ATP site. Positions 91, 137, and 140 each coordinate CTP. The HD domain occupies 228–329 (TGLHTMLVLA…IKLFDKADFW (102 aa)).

The protein belongs to the tRNA nucleotidyltransferase/poly(A) polymerase family. Bacterial CCA-adding enzyme type 1 subfamily. Monomer. Can also form homodimers and oligomers. It depends on Mg(2+) as a cofactor. Ni(2+) serves as cofactor.

It catalyses the reaction a tRNA precursor + 2 CTP + ATP = a tRNA with a 3' CCA end + 3 diphosphate. The enzyme catalyses a tRNA with a 3' CCA end + 2 CTP + ATP = a tRNA with a 3' CCACCA end + 3 diphosphate. In terms of biological role, catalyzes the addition and repair of the essential 3'-terminal CCA sequence in tRNAs without using a nucleic acid template. Adds these three nucleotides in the order of C, C, and A to the tRNA nucleotide-73, using CTP and ATP as substrates and producing inorganic pyrophosphate. tRNA 3'-terminal CCA addition is required both for tRNA processing and repair. Also involved in tRNA surveillance by mediating tandem CCA addition to generate a CCACCA at the 3' terminus of unstable tRNAs. While stable tRNAs receive only 3'-terminal CCA, unstable tRNAs are marked with CCACCA and rapidly degraded. In Shewanella sp. (strain ANA-3), this protein is Multifunctional CCA protein.